A 498-amino-acid polypeptide reads, in one-letter code: MTVFLSFAFLAAILTHIGCSNQRRSPENGGRRYNRIQHGQCAYTFILPEHDGNCRESTTDQYNTNALQRDAPHVEQDFSSQKLQHLEHVMENYTQWLQKIENYIVENMKSEMAQIQQNAVQNHTATMLEIGTSLLSQTAEQTRKLTDVETQVLNQTSRLEIQLLENSLSTYKLEKQLLQQTNEILKIHEKNSLLEHKILEMEGKHKEELDTLKEEKENLQGLVTRQTYIIQELKKQLNRATTNNSVLQKQQLELMDTVHNLVNLCTKEGVLLKGGKKEEVKPFRDCADVYQAGFNKSGIYTIYINNMPEPKKVFCNMDLNGGGWTVIQHREDGSLDFQRGWKEYKMGFGNPSGEYWLGNEFIFAITSQRQYTLRTELMDWEGNRAYSQYDRFHIGNEKQNYRLYLKGHSGTAGKQSSLILHGADFSTKDADNDNCMCKCALMLTGGWWFDACGPSNLNGMFYTAGQNHGKLNGIKWHYFKGPSYSLRSTTMMIRPLDF.

Residues 1–19 (MTVFLSFAFLAAILTHIGC) form the signal peptide. Residues N92, N122, N154, N243, and N295 are each glycosylated (N-linked (GlcNAc...) asparagine). A coiled-coil region spans residues 158-254 (RLEIQLLENS…SVLQKQQLEL (97 aa)). A Fibrinogen C-terminal domain is found at 277 to 497 (KEEVKPFRDC…STTMMIRPLD (221 aa)). Disulfide bonds link C286–C315 and C439–C452.

In terms of assembly, homooligomer. Interacts with TEK/TIE2. Interacts with SVEP1/polydom. Interacts with THBD; this interaction significantly inhibits the generation of activated PC and TAFIa/CPB2 by the thrombin/thrombomodulin complex.

The protein localises to the secreted. Its function is as follows. Binds and activates TIE2 receptor by inducing its tyrosine phosphorylation. Implicated in endothelial developmental processes later and distinct from that of VEGF. Appears to play a crucial role in mediating reciprocal interactions between the endothelium and surrounding matrix and mesenchyme. Mediates blood vessel maturation/stability. It may play an important role in the heart early development. This chain is Angiopoietin-1 (ANGPT1), found in Sus scrofa (Pig).